Here is a 604-residue protein sequence, read N- to C-terminus: UvrABC system protein C (604 aa).

The GIY-YIG domain occupies 17–95 (SQPGVYRMLN…IKSLAPRYNI (79 aa)). In terms of domain architecture, UVR spans 204 to 239 (DEVLKTIEQKMFEASDRQAYEQAVLFRDQMQALRMI).

The protein belongs to the UvrC family. As to quaternary structure, interacts with UvrB in an incision complex.

It localises to the cytoplasm. Functionally, the UvrABC repair system catalyzes the recognition and processing of DNA lesions. UvrC both incises the 5' and 3' sides of the lesion. The N-terminal half is responsible for the 3' incision and the C-terminal half is responsible for the 5' incision. This is UvrABC system protein C from Nitrosomonas eutropha (strain DSM 101675 / C91 / Nm57).